The sequence spans 219 residues: N-(5'-phosphoribosyl)anthranilate isomerase (219 aa).

It belongs to the TrpF family.

The catalysed reaction is N-(5-phospho-beta-D-ribosyl)anthranilate = 1-(2-carboxyphenylamino)-1-deoxy-D-ribulose 5-phosphate. The protein operates within amino-acid biosynthesis; L-tryptophan biosynthesis; L-tryptophan from chorismate: step 3/5. This is N-(5'-phosphoribosyl)anthranilate isomerase from Bradyrhizobium sp. (strain ORS 278).